The primary structure comprises 419 residues: L-rhamnose isomerase (419 aa).

H262, D294, and D296 together coordinate Mn(2+).

It belongs to the rhamnose isomerase family. As to quaternary structure, homotetramer. Mn(2+) serves as cofactor.

It localises to the cytoplasm. It catalyses the reaction L-rhamnopyranose = L-rhamnulose. It participates in carbohydrate degradation; L-rhamnose degradation; glycerone phosphate from L-rhamnose: step 1/3. Its function is as follows. Catalyzes the interconversion of L-rhamnose and L-rhamnulose. The sequence is that of L-rhamnose isomerase from Salmonella enteritidis PT4 (strain P125109).